Here is a 638-residue protein sequence, read N- to C-terminus: Epithelial sodium channel subunit beta (638 aa).

At M1–A50 the chain is on the cytoplasmic side. The helical transmembrane segment at M51–I71 threads the bilayer. At Q72–G530 the chain is on the extracellular side. 9 disulfide bridges follow: C98–C270, C182–C187, C194–C201, C247–C254, C359–C446, C384–C442, C388–C438, C397–C424, and C399–C413. 2 N-linked (GlcNAc...) asparagine glycosylation sites follow: N135 and N141. N-linked (GlcNAc...) asparagine glycosylation is present at N205. A helical transmembrane segment spans residues S531–I551. Over K552–I638 the chain is Cytoplasmic. The disordered stretch occupies residues S594–S620. Residues P614 to Y618 carry the PY motif; recruits WW domain-containing proteins and is thereby required for ubiquitination and inhibition of the channel by NEDD4 and NEDD4L motif. Phosphoserine is present on residues S631 and S633.

It belongs to the amiloride-sensitive sodium channel (TC 1.A.6) family. SCNN1B subfamily. As to quaternary structure, component of the heterotrimeric epithelial sodium channel (ENaC) composed of an alpha/SCNN1A, a beta/SCNN1B and a gamma/SCNN1G subunit. Interacts with WWP1 (via WW domains). Interacts with WWP2 (via WW domains); inhibits the channel. Interacts with the full-length immature form of PCSK9 (pro-PCSK9). Interacts (N-glycosylated) with BPIFA1; the interaction is direct and inhibits the proteolytic processing of SCNN1A and SCNN1G and the activation of ENaC. Post-translationally, ubiquitinated. Can be ubiquitinated at multiple sites and undergo monoubiquitination and polyubiquitination. Ubiquitination by NEDD4 or NEDD4L inhibits the ENaC channel through endocytosis, intracellular retention and degradation of its individual subunits. However, some studies could not confirm the ubiquitination of this subunit of the ENaC. N-glycosylated. N-glycosylation is required for interaction with BPIFA1. In terms of processing, phosphorylated on serine and threonine residues. Aldosterone and insulin increase the basal level of phosphorylation. As to expression, lung and kidney.

It is found in the apical cell membrane. The protein localises to the cytoplasmic vesicle membrane. It carries out the reaction Na(+)(in) = Na(+)(out). With respect to regulation, originally identified and characterized by its inhibition by the diuretic drug amiloride. In terms of biological role, this is one of the three pore-forming subunits of the heterotrimeric epithelial sodium channel (ENaC), a critical regulator of sodium balance and fluid homeostasis. ENaC operates in epithelial tissues, where it mediates the electrodiffusion of sodium ions from extracellular fluid through the apical membrane of cells, with water following osmotically. It plays a key role in maintaining sodium homeostasis through electrogenic sodium reabsorption in the kidneys. This subunit is not essential for ENaC function in airway surface liquid homeostasis and proper mucus clearance. This is Epithelial sodium channel subunit beta from Mus musculus (Mouse).